A 533-amino-acid polypeptide reads, in one-letter code: Subtilisin-like protease 1 (533 aa).

A signal peptide spans 1–19; it reads MGVFRFISISLAAVSAANA. Positions 20–116 are excised as a propeptide; it reads AQILSMPHAQ…VEPDTIISVH (97 aa). Positions 34–115 constitute an Inhibitor I9 domain; that stretch reads SYIVMMKDDT…FVEPDTIISV (82 aa). The region spanning 126–400 is the Peptidase S8 domain; it reads SWGLARISNP…NVLINNGGAK (275 aa). Catalysis depends on charge relay system residues aspartate 158 and histidine 190. The segment at 175–198 is disordered; it reads GSNQVNDGDDRDGSGHGTHTSGTM. N-linked (GlcNAc...) asparagine glycosylation is found at asparagine 233 and asparagine 251. Polar residues predominate over residues 282-294; that stretch reads NDNQDAQSSSPAS. Residues 282-312 form a disordered region; the sequence is NDNQDAQSSSPASEPSVCTVGSSAEDDSRSS. Catalysis depends on serine 345, which acts as the Charge relay system. Positions 378–394 are enriched in polar residues; it reads TSSITDAGPGTPTNVLI. Positions 378–512 are disordered; the sequence is TSSITDAGPG…YPGGDNFDFD (135 aa). Pro residues predominate over residues 405–470; the sequence is NPNPAPSPSP…FPGEPFPGEP (66 aa). The segment covering 471–487 has biased composition (low complexity); it reads FPGESFPGESFPGESAP. The segment covering 488-502 has biased composition (pro residues); sequence APAPMPPSPQHPHTP.

The protein belongs to the peptidase S8 family.

The protein resides in the secreted. In terms of biological role, secreted subtilisin-like serine protease with keratinolytic activity that contributes to pathogenicity. The chain is Subtilisin-like protease 1 (SUB1) from Arthroderma benhamiae (strain ATCC MYA-4681 / CBS 112371) (Trichophyton mentagrophytes).